The primary structure comprises 95 residues: Aspartyl/glutamyl-tRNA(Asn/Gln) amidotransferase subunit C (95 aa).

This sequence belongs to the GatC family. In terms of assembly, heterotrimer of A, B and C subunits.

It carries out the reaction L-glutamyl-tRNA(Gln) + L-glutamine + ATP + H2O = L-glutaminyl-tRNA(Gln) + L-glutamate + ADP + phosphate + H(+). It catalyses the reaction L-aspartyl-tRNA(Asn) + L-glutamine + ATP + H2O = L-asparaginyl-tRNA(Asn) + L-glutamate + ADP + phosphate + 2 H(+). Functionally, allows the formation of correctly charged Asn-tRNA(Asn) or Gln-tRNA(Gln) through the transamidation of misacylated Asp-tRNA(Asn) or Glu-tRNA(Gln) in organisms which lack either or both of asparaginyl-tRNA or glutaminyl-tRNA synthetases. The reaction takes place in the presence of glutamine and ATP through an activated phospho-Asp-tRNA(Asn) or phospho-Glu-tRNA(Gln). The sequence is that of Aspartyl/glutamyl-tRNA(Asn/Gln) amidotransferase subunit C from Cereibacter sphaeroides (strain ATCC 17023 / DSM 158 / JCM 6121 / CCUG 31486 / LMG 2827 / NBRC 12203 / NCIMB 8253 / ATH 2.4.1.) (Rhodobacter sphaeroides).